A 238-amino-acid chain; its full sequence is MADS-box protein 04g005320 (238 aa).

One can recognise an MADS-box domain in the interval 1-61; sequence MGRGKVELKR…GKLYEFCSTS (61 aa). Residues 87-177 form the K-box domain; it reads SQNNYQEYMK…KTKLEENSVA (91 aa).

The protein resides in the nucleus. In terms of biological role, probable MADS-box transcription factor that functions with J2 and EJ2 in meristem maturation. In Solanum lycopersicum (Tomato), this protein is MADS-box protein 04g005320.